A 484-amino-acid chain; its full sequence is tRNA sulfurtransferase (484 aa).

Residues 61–165 (ILLVELLGRI…NDKMMLIKAR (105 aa)) form the THUMP domain. ATP contacts are provided by residues 183–184 (LI), Lys-265, Gly-287, and Gln-296. A disulfide bridge connects residues Cys-344 and Cys-456. The 81-residue stretch at 404-484 (LSANDVILDI…DNVKVLNKIS (81 aa)) folds into the Rhodanese domain. Cys-456 (cysteine persulfide intermediate) is an active-site residue.

The protein belongs to the ThiI family.

The protein localises to the cytoplasm. It catalyses the reaction [ThiI sulfur-carrier protein]-S-sulfanyl-L-cysteine + a uridine in tRNA + 2 reduced [2Fe-2S]-[ferredoxin] + ATP + H(+) = [ThiI sulfur-carrier protein]-L-cysteine + a 4-thiouridine in tRNA + 2 oxidized [2Fe-2S]-[ferredoxin] + AMP + diphosphate. It carries out the reaction [ThiS sulfur-carrier protein]-C-terminal Gly-Gly-AMP + S-sulfanyl-L-cysteinyl-[cysteine desulfurase] + AH2 = [ThiS sulfur-carrier protein]-C-terminal-Gly-aminoethanethioate + L-cysteinyl-[cysteine desulfurase] + A + AMP + 2 H(+). The protein operates within cofactor biosynthesis; thiamine diphosphate biosynthesis. In terms of biological role, catalyzes the ATP-dependent transfer of a sulfur to tRNA to produce 4-thiouridine in position 8 of tRNAs, which functions as a near-UV photosensor. Also catalyzes the transfer of sulfur to the sulfur carrier protein ThiS, forming ThiS-thiocarboxylate. This is a step in the synthesis of thiazole, in the thiamine biosynthesis pathway. The sulfur is donated as persulfide by IscS. This is tRNA sulfurtransferase from Histophilus somni (strain 129Pt) (Haemophilus somnus).